Reading from the N-terminus, the 182-residue chain is MLTKGKILISEPYLGDSTFERSVVLLCEHNDSGAFGFMLNKSTTLTINSVLEEQLTFEQNLFLGGPVAQDSLFFLLRQDRAILKDSVHIKDDLYWGGDFEHLKTLIQEGTLELDNCRFFLGYSGWGEDQLEYELEKHSWIIADINSEDMFVKNPESMWQNVLRSMGGDYKVLSNYPIDPRLN.

It belongs to the UPF0301 (AlgH) family.

This Cytophaga hutchinsonii (strain ATCC 33406 / DSM 1761 / CIP 103989 / NBRC 15051 / NCIMB 9469 / D465) protein is UPF0301 protein CHU_1773.